The sequence spans 653 residues: Potassium voltage-gated channel subfamily A member 4 (653 aa).

Residues 1-304 (MEVAMVSAES…LLFEYPESSS (304 aa)) are Cytoplasmic-facing. The disordered stretch occupies residues 24–148 (QARARERERL…RFYYSEDDHG (125 aa)). Residues 36–52 (SRAAAAAAVAAATAAVE) show a composition bias toward low complexity. Positions 81-97 (GSRRRRRQRSEKKKAHY) are enriched in basic residues. The residue at position 90 (S90) is a Phosphoserine; by PKA. S122 bears the Phosphoserine mark. Residues 122–137 (SEEEEDEEEEEEEEEE) show a composition bias toward acidic residues. Residues 305–326 (PARGIAIVSVLVILISIVIFCL) form a helical membrane-spanning segment. Topologically, residues 327–370 (ETLPEFRDDRDLVMALSAGGHGGLLNDTSAPHLENSGHTIFNDP) are extracellular. A glycan (N-linked (GlcNAc...) asparagine) is linked at N352. Residues 371-392 (FFIVETVCIVWFSFEFVVRCFA) traverse the membrane as a helical segment. Over 393 to 403 (CPSQALFFKNI) the chain is Cytoplasmic. Residues 404 to 424 (MNIIDIVSILPYFITLGTDLA) traverse the membrane as a helical segment. Residues 425–439 (QQQGGGNGQQQQAMS) are Extracellular-facing. The chain crosses the membrane as a helical; Voltage-sensor span at residues 440–460 (FAILRIIRLVRVFRIFKLSRH). The Cytoplasmic segment spans residues 461-475 (SKGLQILGHTLRASM). An S4-S5 linker region spans residues 462–475 (KGLQILGHTLRASM). The chain crosses the membrane as a helical span at residues 476–497 (RELGLLIFFLFIGVILFSSAVY). The Extracellular segment spans residues 498 to 511 (FAEADEPTTHFQSI). An intramembrane region (helical) is located at residues 512–523 (PDAFWWAVVTMT). The short motif at 524-529 (TVGYGD) is the Selectivity filter element. The stretch at 524 to 531 (TVGYGDMK) is an intramembrane region. At 532–538 (PITVGGK) the chain is on the extracellular side. A helical membrane pass occupies residues 539 to 567 (IVGSLCAIAGVLTIALPVPVIVSNFNYFY). Topologically, residues 568 to 653 (HRETENEEQT…SNAKAVETDV (86 aa)) are cytoplasmic. Position 599 is a phosphoserine; by PKA (S599). Basic and acidic residues predominate over residues 629–640 (CQGKGDDSETDK). The disordered stretch occupies residues 629–653 (CQGKGDDSETDKNNCSNAKAVETDV). The short motif at 651-653 (TDV) is the PDZ-binding element.

This sequence belongs to the potassium channel family. A (Shaker) (TC 1.A.1.2) subfamily. Kv1.4/KCNA4 sub-subfamily. Homotetramer and heterotetramer of potassium channel proteins. Interacts with KCNAB1 and KCNAB2. Interacts with DLG1, DLG2 and DLG4 via their PDZ domains. Interacts with SIGMAR1. Detected in a complex with KCNA1. Interacts with KCNA2. Part of a complex containing KCNA1, KCNAB1 and LGI1. Interacts (via cytoplasmic N-terminal domain) with KCNRG. Expressed in brain, and at lower levels in the testis, lung, kidney, colon and heart. Detected in heart ventricle.

It localises to the cell membrane. The protein localises to the cell projection. Its subcellular location is the axon. The enzyme catalyses K(+)(in) = K(+)(out). With respect to regulation, inhibited by 4-aminopyridine (4-AP), but not by tetraethylammonium (TEA) and charybdotoxin (CTX). Functionally, voltage-gated potassium channel that mediates transmembrane potassium transport in excitable membranes. Forms tetrameric potassium-selective channels through which potassium ions pass in accordance with their electrochemical gradient. The channel alternates between opened and closed conformations in response to the voltage difference across the membrane. Can form functional homotetrameric channels and heterotetrameric channels that contain variable proportions of KCNA1, KCNA2, KCNA4, KCNA5, and possibly other family members as well; channel properties depend on the type of alpha subunits that are part of the channel. Channel properties are modulated by cytoplasmic beta subunits that regulate the subcellular location of the alpha subunits and promote rapid inactivation. In vivo, membranes probably contain a mixture of heteromeric potassium channel complexes, making it difficult to assign currents observed in intact tissues to any particular potassium channel family member. Homotetrameric KCNA4 forms a potassium channel that opens in response to membrane depolarization, followed by rapid spontaneous channel closure. Likewise, a heterotetrameric channel formed by KCNA1 and KCNA4 shows rapid inactivation. The protein is Potassium voltage-gated channel subfamily A member 4 (KCNA4) of Homo sapiens (Human).